The primary structure comprises 496 residues: Probable chlorophyll(ide) b reductase NYC1, chloroplastic (496 aa).

The transit peptide at 1–43 (MTTLTKIQVYPQVLEHRLFFRDPIRVGSRLTCRERSNRVYVHR) directs the protein to the chloroplast. 2 helical membrane-spanning segments follow: residues 105-125 (YIVT…LSGG) and 132-152 (LVWY…ANMV). 166–190 (ITGSTRGLGKALAREFLLSGDRVIV) is an NAD(+) binding site. Residues 195 to 224 (SESVDMTVKELEQNLKEIMSNASESARKKL) adopt a coiled-coil conformation. Tyrosine 330 acts as the Proton acceptor in catalysis. A helical membrane pass occupies residues 470-490 (WVSVFSLSVVCAFIILQSTTP).

This sequence belongs to the short-chain dehydrogenases/reductases (SDR) family. As to quaternary structure, interacts with NOL to form a complex that acts as a chlorophyll b reductase. Interacts with HCAR, RCCR, SGR1 and the LHCII complex. Part of a SGR1-CCE-LHCII complex, which acts in chlorophyll breakdown.

The protein localises to the plastid. The protein resides in the chloroplast thylakoid membrane. The catalysed reaction is 7(1)-hydroxychlorophyllide a + NAD(+) = chlorophyllide b + NADH + H(+). The enzyme catalyses 7(1)-hydroxychlorophyllide a + NADP(+) = chlorophyllide b + NADPH + H(+). In terms of biological role, involved in chlorophyll b degradation. Belongs to the chlorophyll catabolic enzymes (CCEs). This Arabidopsis thaliana (Mouse-ear cress) protein is Probable chlorophyll(ide) b reductase NYC1, chloroplastic (NYC1).